The following is a 354-amino-acid chain: MASYTLAELAARVGGQVDGDGKLRLEGIAPLEEATAAEISFFSNRKYRKAFEASRAGAVVVEPGEKVPAGRPVLRVVNAYLAFAKISTLFHPPREAMPEVAPTAVIHPTARVHPSAQVMPLACVGPDAQVGARTILFPGVHVADGARVGEDCVLYHNVVVRERCAVGNRVILQPGCVVGSDGFGFAFDPDGEGKGPRHYKVPQVGNVVIEDDVEVGANTCVDRATLGSTRIGRGAKIDNLVQIAHNVQVGPLSLLVSQVGVAGSTKLGMGVVAGGQAGIVGHLEIGDGVRIGAQSGVMADVEAGETVSGSPAVPHGNWLKAMASLDHLHDMRKELRELRREVERLRADAGEDEP.

His-245 (proton acceptor) is an active-site residue.

This sequence belongs to the transferase hexapeptide repeat family. LpxD subfamily. In terms of assembly, homotrimer.

The enzyme catalyses a UDP-3-O-[(3R)-3-hydroxyacyl]-alpha-D-glucosamine + a (3R)-hydroxyacyl-[ACP] = a UDP-2-N,3-O-bis[(3R)-3-hydroxyacyl]-alpha-D-glucosamine + holo-[ACP] + H(+). It participates in bacterial outer membrane biogenesis; LPS lipid A biosynthesis. Functionally, catalyzes the N-acylation of UDP-3-O-acylglucosamine using 3-hydroxyacyl-ACP as the acyl donor. Is involved in the biosynthesis of lipid A, a phosphorylated glycolipid that anchors the lipopolysaccharide to the outer membrane of the cell. In Anaeromyxobacter dehalogenans (strain 2CP-C), this protein is UDP-3-O-acylglucosamine N-acyltransferase.